The chain runs to 242 residues: Phosphoribosylaminoimidazole-succinocarboxamide synthase (242 aa).

It belongs to the SAICAR synthetase family.

The enzyme catalyses 5-amino-1-(5-phospho-D-ribosyl)imidazole-4-carboxylate + L-aspartate + ATP = (2S)-2-[5-amino-1-(5-phospho-beta-D-ribosyl)imidazole-4-carboxamido]succinate + ADP + phosphate + 2 H(+). It functions in the pathway purine metabolism; IMP biosynthesis via de novo pathway; 5-amino-1-(5-phospho-D-ribosyl)imidazole-4-carboxamide from 5-amino-1-(5-phospho-D-ribosyl)imidazole-4-carboxylate: step 1/2. In Prochlorococcus marinus (strain MIT 9303), this protein is Phosphoribosylaminoimidazole-succinocarboxamide synthase.